We begin with the raw amino-acid sequence, 305 residues long: Mitochondrial citrate transporter D (305 aa).

Solcar repeat units lie at residues 10–101, 111–197, and 211–298; these read LPFG…WGAF, QTQS…VRAQ, and RNDL…VMDF. 6 helical membrane-spanning segments follow: residues 16–36, 78–98, 118–137, 176–196, 208–228, and 270–291; these read FIAGAVAGVSEILVMYPLDVV, SAPILMEAPKRATKFAANDSW, LTGATAGATESFVVVPFELV, TLWRHILWNSGYFGCIFQVRA, QQTRNDLIAGTIGGTAGTILN, and LYKGFLPKVLRLGPGGGILLVV.

This sequence belongs to the mitochondrial carrier (TC 2.A.29) family.

Its subcellular location is the mitochondrion inner membrane. It carries out the reaction citrate(in) + H(+)(in) = citrate(out) + H(+)(out). Mitochondrial transporter that mediates citrate export from mitochondria to cytoplasm. Both ctpA, ctpB, and ctpD play important roles in citric acid transport across the mitochondrial membrane and function in a redundant manner. This Aspergillus niger (strain ATCC 1015 / CBS 113.46 / FGSC A1144 / LSHB Ac4 / NCTC 3858a / NRRL 328 / USDA 3528.7) protein is Mitochondrial citrate transporter D.